A 182-amino-acid polypeptide reads, in one-letter code: Adenine phosphoribosyltransferase (182 aa).

133 to 137 is an AMP binding site; that stretch reads ATGGS.

This sequence belongs to the purine/pyrimidine phosphoribosyltransferase family. As to quaternary structure, homodimer. Mg(2+) serves as cofactor.

It localises to the cytoplasm. It is found in the nucleus. The enzyme catalyses AMP + diphosphate = 5-phospho-alpha-D-ribose 1-diphosphate + adenine. The protein operates within purine metabolism; AMP biosynthesis via salvage pathway; AMP from adenine: step 1/1. In terms of biological role, catalyzes a salvage reaction resulting in the formation of AMP, that is energically less costly than de novo synthesis. The protein is Adenine phosphoribosyltransferase (APT1) of Yarrowia lipolytica (strain CLIB 122 / E 150) (Yeast).